Consider the following 54-residue polypeptide: Large ribosomal subunit protein bL33 (54 aa).

It belongs to the bacterial ribosomal protein bL33 family.

This chain is Large ribosomal subunit protein bL33, found in Chloroflexus aggregans (strain MD-66 / DSM 9485).